A 344-amino-acid chain; its full sequence is tRNA(Ile)-lysidine synthase (344 aa).

30-35 (SGGQDS) lines the ATP pocket. The disordered stretch occupies residues 323–344 (PPPPAPVPPDPGERSPPPSPLY).

This sequence belongs to the tRNA(Ile)-lysidine synthase family.

The protein resides in the cytoplasm. The enzyme catalyses cytidine(34) in tRNA(Ile2) + L-lysine + ATP = lysidine(34) in tRNA(Ile2) + AMP + diphosphate + H(+). Functionally, ligates lysine onto the cytidine present at position 34 of the AUA codon-specific tRNA(Ile) that contains the anticodon CAU, in an ATP-dependent manner. Cytidine is converted to lysidine, thus changing the amino acid specificity of the tRNA from methionine to isoleucine. The sequence is that of tRNA(Ile)-lysidine synthase from Thermosynechococcus vestitus (strain NIES-2133 / IAM M-273 / BP-1).